Reading from the N-terminus, the 287-residue chain is Formamidopyrimidine-DNA glycosylase (287 aa).

Pro2 serves as the catalytic Schiff-base intermediate with DNA. The active-site Proton donor is Glu3. The Proton donor; for beta-elimination activity role is filled by Lys58. Positions 104, 123, and 166 each coordinate DNA. The FPG-type zinc-finger motif lies at 251 to 287; sequence RVYDREGQPCPTPGCKGMIGREVQAGRSTFFCPVCQV. Catalysis depends on Arg277, which acts as the Proton donor; for delta-elimination activity.

Belongs to the FPG family. In terms of assembly, monomer. It depends on Zn(2+) as a cofactor.

It carries out the reaction Hydrolysis of DNA containing ring-opened 7-methylguanine residues, releasing 2,6-diamino-4-hydroxy-5-(N-methyl)formamidopyrimidine.. The catalysed reaction is 2'-deoxyribonucleotide-(2'-deoxyribose 5'-phosphate)-2'-deoxyribonucleotide-DNA = a 3'-end 2'-deoxyribonucleotide-(2,3-dehydro-2,3-deoxyribose 5'-phosphate)-DNA + a 5'-end 5'-phospho-2'-deoxyribonucleoside-DNA + H(+). Involved in base excision repair of DNA damaged by oxidation or by mutagenic agents. Acts as a DNA glycosylase that recognizes and removes damaged bases. Has a preference for oxidized purines, such as 7,8-dihydro-8-oxoguanine (8-oxoG). Has AP (apurinic/apyrimidinic) lyase activity and introduces nicks in the DNA strand. Cleaves the DNA backbone by beta-delta elimination to generate a single-strand break at the site of the removed base with both 3'- and 5'-phosphates. This Caulobacter sp. (strain K31) protein is Formamidopyrimidine-DNA glycosylase.